We begin with the raw amino-acid sequence, 113 residues long: Ranasmurfin (113 aa).

Y2 is modified (2',4',5'-topaquinone). The lysine tyrosylquinone (Tyr-Lys) cross-link spans 2-31 (YACSFPPSEIPGSKECLAEALQKHQGFKKK). Cystine bridges form between C4-C62, C17-C65, and C37-C101. S9 is modified (aminomalonic acid (Ser); in chain B). The S-cysteinyl 3-(oxidosulfanyl)alanine (Cys-Cys); in chain B cross-link spans 17–65 (CLAEALQKHQGFKKKSYALICAYLNYKEDAENYERAAEDFDSAVKCTGC). A cross-link (lysine tyrosylquinone (Lys-Tyr)) is located at residues 30–108 (KKSYALICAY…SLCTLFQKLY (79 aa)). C65 is subject to Cysteine sulfenic acid (-SOH); in chain B. The residue at position 108 (Y108) is a 2',4',5'-topaquinone. Y108 and H112 together coordinate Zn(2+). Residue Y108 forms a 5'-tyrosyl-5'-aminotyrosine (Tyr-Tyr) (interchain with Y-108) linkage.

Homodimer. The two chains, designated A and B, differ in their modifications, but not, it is thought, in their sequence. The cofactor is Zn(2+). In terms of tissue distribution, foam nest.

It localises to the secreted. This chain is Ranasmurfin, found in Polypedates leucomystax (Common tree frog).